A 448-amino-acid polypeptide reads, in one-letter code: Probable D-serine dehydratase (448 aa).

At Lys-119 the chain carries N6-(pyridoxal phosphate)lysine.

Belongs to the serine/threonine dehydratase family. DsdA subfamily. Pyridoxal 5'-phosphate is required as a cofactor.

The catalysed reaction is D-serine = pyruvate + NH4(+). The chain is Probable D-serine dehydratase from Pseudomonas aeruginosa (strain ATCC 15692 / DSM 22644 / CIP 104116 / JCM 14847 / LMG 12228 / 1C / PRS 101 / PAO1).